A 1554-amino-acid polypeptide reads, in one-letter code: Myosin-2 (1554 aa).

A Myosin N-terminal SH3-like domain is found at Glu-4–Asp-57. Residues Glu-70 to Ser-774 form the Myosin motor domain. ATP is bound at residue Gly-164–Thr-171. The segment at Phe-443 to Glu-523 is actin-binding. 6 IQ domains span residues His-778 to Leu-798, Ile-800 to Phe-824, Lys-825 to Ser-847, Leu-848 to Arg-872, Gln-873 to Thr-895, and Thr-896 to Ser-925. The stretch at Val-926–Ser-1079 forms a coiled coil. The tract at residues Gly-1080–Glu-1554 is non alpha-helical, tail domain. Low complexity predominate over residues Thr-1082–Ser-1093. A disordered region spans residues Thr-1082–Arg-1109. The segment covering Ala-1098–Arg-1109 has biased composition (polar residues). The region spanning Ala-1205–Lys-1480 is the Dilute domain.

Belongs to the TRAFAC class myosin-kinesin ATPase superfamily. Myosin family. As to quaternary structure, homodimer. Interacts with calmodulin (CMD1) and the myosin light chain MLC1 through its IQ repeats.

In terms of biological role, myosin heavy chain that is required for the cell cycle-regulated transport of various organelles and proteins for their segregation. Functions by binding with its tail domain to receptor proteins on organelles and exerting force with its N-terminal motor domain against actin filaments, thereby transporting its cargo along polarized actin cables. The chain is Myosin-2 (MYO2) from Lachancea kluyveri (strain ATCC 58438 / CBS 3082 / BCRC 21498 / NBRC 1685 / JCM 7257 / NCYC 543 / NRRL Y-12651) (Yeast).